The sequence spans 211 residues: Orotate phosphoribosyltransferase (211 aa).

5-phospho-alpha-D-ribose 1-diphosphate-binding positions include arginine 103, lysine 107, histidine 109, and 129–137 (EDLISTGKS). Residue serine 133 coordinates orotate.

This sequence belongs to the purine/pyrimidine phosphoribosyltransferase family. PyrE subfamily. Homodimer. Mg(2+) is required as a cofactor.

The enzyme catalyses orotidine 5'-phosphate + diphosphate = orotate + 5-phospho-alpha-D-ribose 1-diphosphate. Its pathway is pyrimidine metabolism; UMP biosynthesis via de novo pathway; UMP from orotate: step 1/2. Its function is as follows. Catalyzes the transfer of a ribosyl phosphate group from 5-phosphoribose 1-diphosphate to orotate, leading to the formation of orotidine monophosphate (OMP). The sequence is that of Orotate phosphoribosyltransferase from Fusobacterium nucleatum subsp. nucleatum (strain ATCC 25586 / DSM 15643 / BCRC 10681 / CIP 101130 / JCM 8532 / KCTC 2640 / LMG 13131 / VPI 4355).